Consider the following 842-residue polypeptide: ATP-binding cassette sub-family B member 6 (842 aa).

Topologically, residues 1 to 26 are lumenal; sequence MVTVGNYCETEGPAGPAWTQNGLSPC. The required for the lysosomal targeting stretch occupies residues 1-205; the sequence is MVTVGNYCET…SGGLFILGLW (205 aa). The interval 1–236 is required for ATPase activity; the sequence is MVTVGNYCET…GNQGRSTDRR (236 aa). C8 and C26 are joined by a disulfide. Residues 27–47 traverse the membrane as a helical segment; the sequence is FFFTLVPSTLLTLGVLALVLV. The Cytoplasmic segment spans residues 48-72; it reads LPRRRREVPAGPEELSWAAGPRVAP. Residues 73 to 93 form a helical membrane-spanning segment; that stretch reads YVLQLFLATLQMALPLAGLAG. The Lumenal segment spans residues 94–106; sequence RVGTARGVRLPGY. A helical membrane pass occupies residues 107–127; that stretch reads LLLASVLESLASVCGLWLLVV. Residues 128–147 lie on the Cytoplasmic side of the membrane; the sequence is ERSQARQSLAMGVWMKFRHS. The helical transmembrane segment at 148-168 threads the bilayer; it reads LGLLLLWTVTFAAENLALVSW. At 169–185 the chain is on the lumenal side; that stretch reads NSPQWWWARADLGQQVQ. A helical transmembrane segment spans residues 186–206; the sequence is FGLWVLRYVTSGGLFILGLWA. Residues 207 to 263 are Cytoplasmic-facing; sequence PGLRPQSYTLHVHEEDQDVGGNQGRSTDRRSTWRDLGRKLRLLSSYLWPRGSPSLQL. Residues 264–284 form a helical membrane-spanning segment; sequence IVLICLGLMGLERALNVLVPI. The 292-residue stretch at 265-556 folds into the ABC transmembrane type-1 domain; it reads VLICLGLMGL…FGTYYRMIQT (292 aa). Over 285–291 the chain is Lumenal; it reads FYRDIVN. Residues 292-312 traverse the membrane as a helical segment; it reads LLTAKAPWSSLAWTVTTYVFL. The Cytoplasmic segment spans residues 313–375; the sequence is KFLQGGGTGS…TGEVLRIVDR (63 aa). A helical transmembrane segment spans residues 376–396; the sequence is GTSSVTGLLSYLVFSIIPTLA. D397 is a topological domain (lumenal). A helical membrane pass occupies residues 398-418; the sequence is IIIGIIYFSMFFNAWFGLIVF. At 419-499 the chain is on the cytoplasmic side; that stretch reads LCMSLYLILT…STASLVVLNQ (81 aa). The helical transmembrane segment at 500–520 threads the bilayer; that stretch reads TQNLVIGLGLLAGSLLCAYFV. The Lumenal segment spans residues 521 to 529; sequence SEQKLQVGD. The helical transmembrane segment at 530–550 threads the bilayer; it reads FVLFGTYITQLYMPLNWFGTY. Residues 551 to 842 lie on the Cytoplasmic side of the membrane; that stretch reads YRMIQTNFID…PEESKPQDTA (292 aa). The ABC transporter domain maps to 590-824; sequence IEFENVHFSY…GGVYAEMWQL (235 aa). ATP is bound by residues Y599 and 623–634; that span reads GPSGAGKSTILR.

This sequence belongs to the ABC transporter superfamily. ABCB family. Heavy Metal importer (TC 3.A.1.210) subfamily. Homodimer. In terms of processing, N-glycosylated.

Its subcellular location is the cell membrane. It localises to the mitochondrion outer membrane. The protein resides in the endoplasmic reticulum membrane. The protein localises to the golgi apparatus membrane. It is found in the endosome membrane. Its subcellular location is the lysosome membrane. It localises to the late endosome membrane. The protein resides in the early endosome membrane. The protein localises to the secreted. It is found in the extracellular exosome. Its subcellular location is the mitochondrion. It localises to the endosome. The protein resides in the multivesicular body membrane. The protein localises to the melanosome membrane. It catalyses the reaction coproporphyrin III(in) + ATP + H2O = coproporphyrin III(out) + ADP + phosphate + H(+). It carries out the reaction coproporphyrinogen III(in) + ATP + H2O = coproporphyrinogen III(out) + ADP + phosphate + H(+). The enzyme catalyses heme b(in) + ATP + H2O = heme b(out) + ADP + phosphate + H(+). The catalysed reaction is pheophorbide a(in) + ATP + H2O = pheophorbide a(out) + ADP + phosphate + H(+). It catalyses the reaction protoporphyrin IX(in) + ATP + H2O = protoporphyrin IX(out) + ADP + phosphate + H(+). It carries out the reaction coproporphyrin I(in) + ATP + H2O = coproporphyrin I(out) + ADP + phosphate + H(+). The enzyme catalyses uroporphyrin I(in) + ATP + H2O = uroporphyrin I(out) + ADP + phosphate + H(+). The catalysed reaction is uroporphyrin III(in) + ATP + H2O = uroporphyrin III(out) + ADP + phosphate + H(+). In terms of biological role, ATP-dependent transporter that catalyzes the transport of a broad-spectrum of porphyrins from the cytoplasm to the extracellular space through the plasma membrane or into the vesicle lumen. May also function as an ATP-dependent importer of porphyrins from the cytoplasm into the mitochondria, in turn may participate in the de novo heme biosynthesis regulation and in the coordination of heme and iron homeostasis during phenylhydrazine stress. May play a key role in the early steps of melanogenesis producing PMEL amyloid fibrils. In vitro, it confers to cells a resistance to toxic metal such as arsenic and cadmium and against chemotherapeutics agent such as 5-fluorouracil, SN-38 and vincristin. In addition may play a role in the transition metal homeostasis. The polypeptide is ATP-binding cassette sub-family B member 6 (Mus musculus (Mouse)).